A 544-amino-acid chain; its full sequence is Formate--tetrahydrofolate ligase (544 aa).

An ATP-binding site is contributed by 63–70 (TPAGEGKS).

The protein belongs to the formate--tetrahydrofolate ligase family.

It catalyses the reaction (6S)-5,6,7,8-tetrahydrofolate + formate + ATP = (6R)-10-formyltetrahydrofolate + ADP + phosphate. It participates in one-carbon metabolism; tetrahydrofolate interconversion. The sequence is that of Formate--tetrahydrofolate ligase from Fusobacterium nucleatum subsp. nucleatum (strain ATCC 25586 / DSM 15643 / BCRC 10681 / CIP 101130 / JCM 8532 / KCTC 2640 / LMG 13131 / VPI 4355).